A 493-amino-acid chain; its full sequence is tRNA (uracil-5-)-methyltransferase homolog B (493 aa).

Residues 1 to 14 (MHNPRLFLSRAGFF) constitute a mitochondrion transit peptide. S-adenosyl-L-methionine is bound by residues Q312, E362, and N412. C440 acts as the Nucleophile in catalysis. E486 serves as the catalytic Proton acceptor.

It belongs to the class I-like SAM-binding methyltransferase superfamily. RNA M5U methyltransferase family.

It is found in the mitochondrion matrix. It catalyses the reaction uridine(54) in tRNA + S-adenosyl-L-methionine = 5-methyluridine(54) in tRNA + S-adenosyl-L-homocysteine + H(+). The catalysed reaction is a uridine in 12S rRNA + S-adenosyl-L-methionine = a 5-methyluridine in 12S rRNA + S-adenosyl-L-homocysteine + H(+). Functionally, mitochondrial S-adenosyl-L-methionine-dependent methyltransferase that catalyzes the formation of 5-methyl-uridine in tRNAs and 12S rRNA. Catalyzes the methylation of uridine at position 54 (m5U54) in all tRNAs. Specifically methylates the uridine in position 425 of 12S rRNA (m5U425). Does not affect RNA stability or mitochondrial translation. This chain is tRNA (uracil-5-)-methyltransferase homolog B, found in Mus musculus (Mouse).